The primary structure comprises 452 residues: Bifunctional protein GlmU (452 aa).

Residues 1 to 232 form a pyrophosphorylase region; sequence MTARNSLTIV…EDEVRGINTK (232 aa). UDP-N-acetyl-alpha-D-glucosamine-binding positions include 11–14, Lys25, Gln78, and 83–84; these read LAAG and GT. Asp108 contacts Mg(2+). Positions 144, 158, 173, and 230 each coordinate UDP-N-acetyl-alpha-D-glucosamine. Mg(2+) is bound at residue Asn230. Residues 233-253 are linker; the sequence is AQLAEAETVMQTRLRLAAMAA. An N-acetyltransferase region spans residues 254-452; it reads GVTLIAPETV…KSRHRKPKAH (199 aa). UDP-N-acetyl-alpha-D-glucosamine-binding residues include Arg319 and Lys337. His349 acts as the Proton acceptor in catalysis. UDP-N-acetyl-alpha-D-glucosamine is bound by residues Tyr352 and Asn363. Residues Ala366, 372–373, Ser391, Ser409, and Arg426 each bind acetyl-CoA; that span reads NY.

The protein in the N-terminal section; belongs to the N-acetylglucosamine-1-phosphate uridyltransferase family. In the C-terminal section; belongs to the transferase hexapeptide repeat family. As to quaternary structure, homotrimer. It depends on Mg(2+) as a cofactor.

It localises to the cytoplasm. The catalysed reaction is alpha-D-glucosamine 1-phosphate + acetyl-CoA = N-acetyl-alpha-D-glucosamine 1-phosphate + CoA + H(+). It carries out the reaction N-acetyl-alpha-D-glucosamine 1-phosphate + UTP + H(+) = UDP-N-acetyl-alpha-D-glucosamine + diphosphate. Its pathway is nucleotide-sugar biosynthesis; UDP-N-acetyl-alpha-D-glucosamine biosynthesis; N-acetyl-alpha-D-glucosamine 1-phosphate from alpha-D-glucosamine 6-phosphate (route II): step 2/2. It functions in the pathway nucleotide-sugar biosynthesis; UDP-N-acetyl-alpha-D-glucosamine biosynthesis; UDP-N-acetyl-alpha-D-glucosamine from N-acetyl-alpha-D-glucosamine 1-phosphate: step 1/1. It participates in bacterial outer membrane biogenesis; LPS lipid A biosynthesis. Catalyzes the last two sequential reactions in the de novo biosynthetic pathway for UDP-N-acetylglucosamine (UDP-GlcNAc). The C-terminal domain catalyzes the transfer of acetyl group from acetyl coenzyme A to glucosamine-1-phosphate (GlcN-1-P) to produce N-acetylglucosamine-1-phosphate (GlcNAc-1-P), which is converted into UDP-GlcNAc by the transfer of uridine 5-monophosphate (from uridine 5-triphosphate), a reaction catalyzed by the N-terminal domain. This is Bifunctional protein GlmU from Rhodopseudomonas palustris (strain TIE-1).